A 98-amino-acid chain; its full sequence is Putative septation protein SpoVG (98 aa).

The protein belongs to the SpoVG family.

Its function is as follows. Could be involved in septation. The chain is Putative septation protein SpoVG from Alkaliphilus metalliredigens (strain QYMF).